The sequence spans 204 residues: Small ribosomal subunit protein uS4c (204 aa).

The S4 RNA-binding domain maps to 90 to 150; that stretch reads MRLDNILYRL…GKKTDQLKTI (61 aa).

It belongs to the universal ribosomal protein uS4 family. In terms of assembly, part of the 30S ribosomal subunit. Contacts protein S5. The interaction surface between S4 and S5 is involved in control of translational fidelity.

It is found in the plastid. The protein resides in the chloroplast. Functionally, one of the primary rRNA binding proteins, it binds directly to 16S rRNA where it nucleates assembly of the body of the 30S subunit. With S5 and S12 plays an important role in translational accuracy. The protein is Small ribosomal subunit protein uS4c (rps4) of Gnetum parvifolium (Small-leaved jointfir).